Here is a 921-residue protein sequence, read N- to C-terminus: Phototropin-1A (921 aa).

A compositionally biased stretch (gly residues) spans 1–11 (MASKGTEGGHG). Disordered stretches follow at residues 1–59 (MASK…SPFL) and 88–118 (TGLP…QSAA). The span at 40–51 (SSASSFRTAAAA) shows a compositional bias: low complexity. Polar residues predominate over residues 97–117 (RPSSGSARTSSEDNPQQQQSA). Residues 123-197 (VSEELRAALS…KIRQSLANGS (75 aa)) enclose the PAS 1 domain. Residues 172–177 (NCRFLQ), arginine 190, asparagine 205, asparagine 215, and glutamine 236 each bind FMN. Residue cysteine 173 is modified to S-4a-FMN cysteine. A PAC 1 domain is found at 197-251 (SNYCGRILNYKKDGTPFWNLLTIAPIKDEDGRLLKFIGMQVEVSKYTEGKKDTVV). Over residues 286–295 (RSLSESSNNT) the composition is skewed to polar residues. Disordered regions lie at residues 286 to 347 (RSLS…NRTR) and 364 to 390 (SVEK…ESFE). Basic and acidic residues-rich tracts occupy residues 312–321 (PSKRSSESGS) and 364–376 (SVEK…RDED). The PAS 2 domain occupies 400 to 473 (RGIDLATTLE…RKIRDAIDNQ (74 aa)). FMN contacts are provided by residues 449-454 (NCRFLQ), arginine 467, asparagine 482, asparagine 492, and glutamine 513. Cysteine 450 is modified (S-4a-FMN cysteine). Positions 474–528 (AEVTVQLINYTKSGKKFWNLFHLQPMRDQKGDVQYFIGVQLDGTEHVQDDAAKEG) constitute a PAC 2 domain. Residues 594–881 (FRPVKPLGSG…ANEIKGHPFF (288 aa)) enclose the Protein kinase domain. Residues 600–608 (LGSGDTGSV) and lysine 623 contribute to the ATP site. Aspartate 719 (proton acceptor) is an active-site residue.

Belongs to the protein kinase superfamily. Ser/Thr protein kinase family. In terms of assembly, homodimer. FMN is required as a cofactor. In terms of processing, autophosphorylated in response to blue light irradiation. 2 molecules of FMN bind covalently to cysteines after exposure to blue light and are reversed in the dark. As to expression, highly expressed in coleoptiles of dark-grown seedlings.

The catalysed reaction is L-seryl-[protein] + ATP = O-phospho-L-seryl-[protein] + ADP + H(+). It catalyses the reaction L-threonyl-[protein] + ATP = O-phospho-L-threonyl-[protein] + ADP + H(+). Functionally, protein kinase that acts as a blue light photoreceptor in a signal-transduction pathway for phototropic responses. Regulates a wide range of physiological activities in plants that maximize the efficiency of photosynthesis, such as chloroplast relocations, stomata opening, and leaf expansion. This Oryza sativa subsp. japonica (Rice) protein is Phototropin-1A (PHOT1A).